The primary structure comprises 185 residues: Elongation factor P (185 aa).

It belongs to the elongation factor P family.

Its subcellular location is the cytoplasm. It functions in the pathway protein biosynthesis; polypeptide chain elongation. Its function is as follows. Involved in peptide bond synthesis. Stimulates efficient translation and peptide-bond synthesis on native or reconstituted 70S ribosomes in vitro. Probably functions indirectly by altering the affinity of the ribosome for aminoacyl-tRNA, thus increasing their reactivity as acceptors for peptidyl transferase. The sequence is that of Elongation factor P from Thermosynechococcus vestitus (strain NIES-2133 / IAM M-273 / BP-1).